The chain runs to 63 residues: Conotoxin TxMRCL-D012 (63 aa).

Residues 1 to 19 form the signal peptide; the sequence is MRCLPVFVILLLLIASTPS. A propeptide spanning residues 20 to 47 is cleaved from the precursor; sequence DTVPLKTKDDMPQASFHGNARRTLQMLS. Gln-50 is modified (pyrrolidone carboxylic acid).

Belongs to the conotoxin T superfamily. In terms of processing, contains 2 disulfide bonds that can be either 'C1-C3, C2-C4' or 'C1-C4, C2-C3', since these disulfide connectivities have been observed for conotoxins with cysteine framework V (for examples, see AC P0DQQ7 and AC P81755). Expressed by the venom duct.

It is found in the secreted. The chain is Conotoxin TxMRCL-D012 from Conus textile (Cloth-of-gold cone).